We begin with the raw amino-acid sequence, 288 residues long: Beta-lactamase CARB-4 (288 aa).

A signal peptide spans 1–17; it reads MKLLLVFSLLIPSMVFA. Residue serine 65 is the Acyl-ester intermediate of the active site. Residues cysteine 72 and cysteine 118 are joined by a disulfide bond. 229-231 serves as a coordination point for substrate; that stretch reads RSG.

Belongs to the class-A beta-lactamase family.

The enzyme catalyses a beta-lactam + H2O = a substituted beta-amino acid. With respect to regulation, inhibited by clavulanic acid and sulbactam. Its function is as follows. Hydrolyzes carbenicillin. Methicillin and oxacillin are weakly hydrolyzed. The protein is Beta-lactamase CARB-4 (carB4) of Pseudomonas aeruginosa.